The sequence spans 217 residues: Cytidylate kinase (217 aa).

An ATP-binding site is contributed by 9–17 (GPAGSGKTT).

This sequence belongs to the cytidylate kinase family. Type 1 subfamily.

Its subcellular location is the cytoplasm. The enzyme catalyses CMP + ATP = CDP + ADP. It catalyses the reaction dCMP + ATP = dCDP + ADP. The sequence is that of Cytidylate kinase from Thermosipho melanesiensis (strain DSM 12029 / CIP 104789 / BI429).